Here is a 640-residue protein sequence, read N- to C-terminus: Calpain-5 (640 aa).

A Calpain catalytic domain is found at 26–343; sequence LFEDPLFPAT…FTDIIKCRLI (318 aa). Residues cysteine 81, histidine 252, and asparagine 284 contribute to the active site. The domain III stretch occupies residues 344–496; sequence NTSYLSIHKT…VFTDVPSNCR (153 aa). The C2 domain maps to 499-617; it reads RLDEPPRTCW…HTLHLQDRSS (119 aa).

Belongs to the peptidase C2 family.

Calcium-regulated non-lysosomal thiol-protease. The polypeptide is Calpain-5 (Capn5) (Mus musculus (Mouse)).